The following is a 207-amino-acid chain: Glycerol-3-phosphate acyltransferase (207 aa).

A run of 5 helical transmembrane segments spans residues 4–24 (VVAT…SFAV), 58–78 (ILTL…AQWL), 86–106 (ETGI…PVFH), 120–140 (ILLA…LIIA), and 162–182 (VLMN…VLLI).

The protein belongs to the PlsY family. As to quaternary structure, probably interacts with PlsX.

It localises to the cell inner membrane. It catalyses the reaction an acyl phosphate + sn-glycerol 3-phosphate = a 1-acyl-sn-glycero-3-phosphate + phosphate. It functions in the pathway lipid metabolism; phospholipid metabolism. Functionally, catalyzes the transfer of an acyl group from acyl-phosphate (acyl-PO(4)) to glycerol-3-phosphate (G3P) to form lysophosphatidic acid (LPA). This enzyme utilizes acyl-phosphate as fatty acyl donor, but not acyl-CoA or acyl-ACP. This chain is Glycerol-3-phosphate acyltransferase, found in Ralstonia pickettii (strain 12J).